A 439-amino-acid polypeptide reads, in one-letter code: Protein pop-1 (439 aa).

Residues 1 to 38 (MMADEELGDEVKVFRRDEDADDDPMISGETSEQQLADD) are disordered. The span at 9 to 18 (DEVKVFRRDE) shows a compositional bias: basic and acidic residues. Residues 87-138 (SGLPIMFPMVVPQYLSPNPNINMMNMMTMRAAMAGAPLSPAFPAMFSPNPLF) form an involved in nuclear asymmetry region. Phosphoserine; by LIT1 is present on serine 125. Residues 199–269 (IKKPLNAFMW…SHKEKYPQWS (71 aa)) constitute a DNA-binding region (HMG box). Positions 254–265 (AKKDRESHKEKY) are enriched in basic and acidic residues. 3 disordered regions span residues 254-298 (AKKD…NNDQ), 329-365 (RSGS…MPMN), and 385-439 (SAHL…VCTL). Residues 277–286 (NKKKPKRKRD) are compositionally biased toward basic residues. Composition is skewed to low complexity over residues 346-365 (GCSS…MPMN) and 385-400 (SAHL…SGTS). A compositionally biased stretch (acidic residues) spans 409-420 (SESDVDEDEDID). The span at 422–439 (TITQQTQEYIMQESVCTL) shows a compositional bias: polar residues.

The protein belongs to the TCF/LEF family. In terms of assembly, interacts with hda-1. Interacts with bar-1. Interacts with par-5; the interaction is direct and is enhanced by lit-1-mediated pop-1 phosphorylation. The interaction also leads to the subsequent nuclear export of pop-1. Interacts (when phosphorylated on Ser-125) with lit-1; the interaction is dependent on the beta-catenin-lit-1 complex. Interacts with wrm-1. Phosphorylated on Ser-125 by lit-1 in the beta-catenin-lit-1 complex. Phosphorylation promotes the interaction of pop-1 and par-5 and the subsequent translocation of pop-1 from the nucleus to the cytoplasm.

It localises to the nucleus. The protein resides in the cytoplasm. Its function is as follows. Part of the Wnt signaling pathway essential for the specification of the mesodermal cell fate in early embryos. Required for asymmetrical division of somatic gonadal precursor descendants which initiate axis formation required to control organ shape. Similarly, involved in asymmetrical division of seam cells, a stem cell-like lineage. Represses expression of target genes via its interaction with hda-1 histone deacetylase. Required for specification of the M lineage-derived coelomocyte and sex myoblast fate. Regulates coelomocyte fate by positively regulating proliferation and ceh-34 and possibly eya-1 expression in M.dlpa and M.drpa precursors. The chain is Protein pop-1 from Caenorhabditis briggsae.